Here is a 244-residue protein sequence, read N- to C-terminus: Probable transcriptional regulatory protein TT_C0469 (244 aa).

The protein belongs to the TACO1 family.

It is found in the cytoplasm. This is Probable transcriptional regulatory protein TT_C0469 from Thermus thermophilus (strain ATCC BAA-163 / DSM 7039 / HB27).